We begin with the raw amino-acid sequence, 261 residues long: uncharacterized protein (261 aa).

It belongs to the FrhB family.

This is an uncharacterized protein from Methanocaldococcus jannaschii (strain ATCC 43067 / DSM 2661 / JAL-1 / JCM 10045 / NBRC 100440) (Methanococcus jannaschii).